The primary structure comprises 353 residues: Photosystem II protein D1 (353 aa).

The residue at position 2 (Thr-2) is an N-acetylthreonine. Thr-2 bears the Phosphothreonine mark. 3 consecutive transmembrane segments (helical) span residues Tyr-29–Ser-46, His-118–Leu-133, and Trp-142–Ala-156. His-118 serves as a coordination point for chlorophyll a. Tyr-126 serves as a coordination point for pheophytin a. Asp-170 and Glu-189 together coordinate [CaMn4O5] cluster. The chain crosses the membrane as a helical span at residues Phe-197–Leu-218. His-198 serves as a coordination point for chlorophyll a. Residues His-215 and Ser-264–Phe-265 contribute to the a quinone site. His-215 provides a ligand contact to Fe cation. His-272 contributes to the Fe cation binding site. The chain crosses the membrane as a helical span at residues Phe-274–Leu-288. [CaMn4O5] cluster contacts are provided by His-332, Glu-333, Asp-342, and Ala-344. The propeptide occupies Ala-345–Gly-353.

This sequence belongs to the reaction center PufL/M/PsbA/D family. PSII is composed of 1 copy each of membrane proteins PsbA, PsbB, PsbC, PsbD, PsbE, PsbF, PsbH, PsbI, PsbJ, PsbK, PsbL, PsbM, PsbT, PsbX, PsbY, PsbZ, Psb30/Ycf12, at least 3 peripheral proteins of the oxygen-evolving complex and a large number of cofactors. It forms dimeric complexes. It depends on The D1/D2 heterodimer binds P680, chlorophylls that are the primary electron donor of PSII, and subsequent electron acceptors. It shares a non-heme iron and each subunit binds pheophytin, quinone, additional chlorophylls, carotenoids and lipids. D1 provides most of the ligands for the Mn4-Ca-O5 cluster of the oxygen-evolving complex (OEC). There is also a Cl(-1) ion associated with D1 and D2, which is required for oxygen evolution. The PSII complex binds additional chlorophylls, carotenoids and specific lipids. as a cofactor. Tyr-161 forms a radical intermediate that is referred to as redox-active TyrZ, YZ or Y-Z. Post-translationally, C-terminally processed by CTPA; processing is essential to allow assembly of the oxygen-evolving complex and thus photosynthetic growth.

Its subcellular location is the plastid. It is found in the chloroplast thylakoid membrane. The catalysed reaction is 2 a plastoquinone + 4 hnu + 2 H2O = 2 a plastoquinol + O2. Its function is as follows. Photosystem II (PSII) is a light-driven water:plastoquinone oxidoreductase that uses light energy to abstract electrons from H(2)O, generating O(2) and a proton gradient subsequently used for ATP formation. It consists of a core antenna complex that captures photons, and an electron transfer chain that converts photonic excitation into a charge separation. The D1/D2 (PsbA/PsbD) reaction center heterodimer binds P680, the primary electron donor of PSII as well as several subsequent electron acceptors. The protein is Photosystem II protein D1 of Agrostis stolonifera (Creeping bentgrass).